We begin with the raw amino-acid sequence, 275 residues long: Non-heme chloroperoxidase CPO-A1 (275 aa).

Residues 22–255 form the AB hydrolase-1 domain; the sequence is PVVFIHGWPL…KVYEGSSHGI (234 aa). Active-site charge relay system residues include serine 95, aspartate 224, and histidine 253.

This sequence belongs to the AB hydrolase superfamily. Bacterial non-heme haloperoxidase / perhydrolase family. As to quaternary structure, homodimer.

With respect to regulation, brominating activity not inhibited by azide, peroxidase activity stimulated by bromide. Its function is as follows. May be a chlorinating enzyme involved in 7-chlorotetracycline biosynthesis. Able to brominate as well. In Kitasatospora aureofaciens (Streptomyces aureofaciens), this protein is Non-heme chloroperoxidase CPO-A1 (bpoA1).